Here is a 53-residue protein sequence, read N- to C-terminus: Serine rich endogenous peptide 3 (53 aa).

A signal peptide spans 1-26 (MTKKGPLNLRLLLLLLVVLLPSCSNC). The SCOOP motif signature appears at 37-53 (SSEWRRKMITVWSKSSY). A SxS motif essential for MIK2 binding motif is present at residues 49–51 (SKS).

It belongs to the serine rich endogenous peptide (SCOOP) phytocytokine family. As to quaternary structure, interacts with MIK2 (via extracellular leucine-rich repeat domain); this interaction triggers the formation of complex between MIK2 and the BAK1/SERK3 and SERK4 coreceptors, and subsequent BAK1 activation by phosphorylation.

Its subcellular location is the cell membrane. The protein resides in the secreted. It is found in the extracellular space. It localises to the apoplast. Brassicaceae-specific phytocytokine (plant endogenous peptide released into the apoplast) perceived by MIK2 in a BAK1/SERK3 and SERK4 coreceptors-dependent manner, that modulates various physiological and antimicrobial processes including growth prevention and reactive oxygen species (ROS) response regulation. The chain is Serine rich endogenous peptide 3 from Arabidopsis thaliana (Mouse-ear cress).